The following is a 501-amino-acid chain: MLLIWLLLLTIVTLNFWLRHKYDYFRSRGIPHLPPSSWSPMGNLGQLLFLRISFGDLFRQLYADPRNGQAKIVGFFIFQTPALMVRDPELIRQVLIKNFNNFLNRFESADAGDPMGALTLPLAKYHHWKESRQCMSQLFTSGRMRDVMYSQMLDVASDLEQYLNRKLGDRLERVLPLGRMCQLYTTDVTGNLFYSLNVGGLRRGRSELITKTKELFNTNPRKVLDFMSVFFLPKWTGVLKPKVFTEDYARYMRHLVDDHHEPTKGDLINQLQHFQLSRSSNHYSQHPDFVASQAGIILLAGFETSSALMGFTLYELAKAPDIQERLRSELREAFISTATLSYDTLMTLPYLKMVCLEALRLYPAAAFVNRECTSSASEGFSLQPHVDFIVPPGMPAYISILGLHRDERFWPEPCVFDPERFGPERSRHIHPMTYIPFGAGPHGCIGSRLGVLQLKLGIVHILKQYWVETCERTVSEIRFNPKSFMLESENEIYLRFCRSSL.

C444 contributes to the heme binding site.

Belongs to the cytochrome P450 family. Heme serves as cofactor.

The protein resides in the endoplasmic reticulum membrane. It localises to the microsome membrane. May be involved in the metabolism of insect hormones and in the breakdown of synthetic insecticides. This chain is Probable cytochrome P450 6t3 (Cyp6t3), found in Drosophila melanogaster (Fruit fly).